Here is an 85-residue protein sequence, read N- to C-terminus: U4-theraphotoxin-Hhn1l (85 aa).

An N-terminal signal peptide occupies residues 1–22 (MKVTLIAFLTCAAVLVLHTTAA). A propeptide spanning residues 23–48 (EELEAESQLMGVGMPDTELAAVDEER) is cleaved from the precursor. 3 disulfides stabilise this stretch: Cys-52–Cys-66, Cys-56–Cys-77, and Cys-71–Cys-82.

It belongs to the neurotoxin 12 (Hwtx-2) family. 02 (Hwtx-2) subfamily. Expressed by the venom gland.

It is found in the secreted. Functionally, postsynaptic neurotoxin. The sequence is that of U4-theraphotoxin-Hhn1l from Cyriopagopus hainanus (Chinese bird spider).